A 545-amino-acid polypeptide reads, in one-letter code: Phenylalanine--tRNA ligase beta subunit (545 aa).

Positions 268 to 343 constitute a B5 domain; sequence FLHKIQNVRE…MSIGYNNLEP (76 aa). The Mg(2+) site is built by D321, D327, E330, and D331.

This sequence belongs to the phenylalanyl-tRNA synthetase beta subunit family. Type 2 subfamily. Tetramer of two alpha and two beta subunits. The cofactor is Mg(2+).

Its subcellular location is the cytoplasm. The enzyme catalyses tRNA(Phe) + L-phenylalanine + ATP = L-phenylalanyl-tRNA(Phe) + AMP + diphosphate + H(+). This chain is Phenylalanine--tRNA ligase beta subunit, found in Saccharolobus islandicus (strain M.14.25 / Kamchatka #1) (Sulfolobus islandicus).